Reading from the N-terminus, the 166-residue chain is Protein-export protein SecB (166 aa).

The protein belongs to the SecB family. In terms of assembly, homotetramer, a dimer of dimers. One homotetramer interacts with 1 SecA dimer.

It localises to the cytoplasm. One of the proteins required for the normal export of preproteins out of the cell cytoplasm. It is a molecular chaperone that binds to a subset of precursor proteins, maintaining them in a translocation-competent state. It also specifically binds to its receptor SecA. This Rhizorhabdus wittichii (strain DSM 6014 / CCUG 31198 / JCM 15750 / NBRC 105917 / EY 4224 / RW1) (Sphingomonas wittichii) protein is Protein-export protein SecB.